The primary structure comprises 36 residues: Putative DNA-binding protein inhibitor ID-2B (36 aa).

The protein is Putative DNA-binding protein inhibitor ID-2B (ID2B) of Homo sapiens (Human).